The following is a 444-amino-acid chain: Glutamate--tRNA ligase (444 aa).

A 'HIGH' region motif is present at residues 12–22; sequence PSPTGFLHVGG. A 'KMSKS' region motif is present at residues 213 to 217; that stretch reads KMSKR. Lys216 provides a ligand contact to ATP.

It belongs to the class-I aminoacyl-tRNA synthetase family. Glutamate--tRNA ligase type 1 subfamily. In terms of assembly, monomer.

The protein localises to the cytoplasm. It carries out the reaction tRNA(Glu) + L-glutamate + ATP = L-glutamyl-tRNA(Glu) + AMP + diphosphate. Functionally, catalyzes the attachment of glutamate to tRNA(Glu) in a two-step reaction: glutamate is first activated by ATP to form Glu-AMP and then transferred to the acceptor end of tRNA(Glu). The chain is Glutamate--tRNA ligase from Methylacidiphilum infernorum (isolate V4) (Methylokorus infernorum (strain V4)).